The sequence spans 270 residues: 4-hydroxy-tetrahydrodipicolinate reductase (270 aa).

NAD(+) is bound by residues 9–14 and E35; that span reads GAGGRM. R36 provides a ligand contact to NADP(+). Residues 99-101 and 123-126 contribute to the NAD(+) site; these read GTT and ASNF. H156 (proton donor/acceptor) is an active-site residue. H157 contributes to the (S)-2,3,4,5-tetrahydrodipicolinate binding site. Residue K160 is the Proton donor of the active site. Residue 166–167 coordinates (S)-2,3,4,5-tetrahydrodipicolinate; it reads GT.

The protein belongs to the DapB family.

It localises to the cytoplasm. It carries out the reaction (S)-2,3,4,5-tetrahydrodipicolinate + NAD(+) + H2O = (2S,4S)-4-hydroxy-2,3,4,5-tetrahydrodipicolinate + NADH + H(+). The enzyme catalyses (S)-2,3,4,5-tetrahydrodipicolinate + NADP(+) + H2O = (2S,4S)-4-hydroxy-2,3,4,5-tetrahydrodipicolinate + NADPH + H(+). Its pathway is amino-acid biosynthesis; L-lysine biosynthesis via DAP pathway; (S)-tetrahydrodipicolinate from L-aspartate: step 4/4. Functionally, catalyzes the conversion of 4-hydroxy-tetrahydrodipicolinate (HTPA) to tetrahydrodipicolinate. The protein is 4-hydroxy-tetrahydrodipicolinate reductase of Haemophilus influenzae (strain PittGG).